The sequence spans 217 residues: Adenylate kinase (217 aa).

ATP is bound at residue 10 to 15; the sequence is GAGKGT. An NMP region spans residues 30-59; that stretch reads STGDIFRSNIKNGTELGRKAKEYIDKGLLV. AMP is bound by residues Thr-31, Arg-36, 57-59, 85-88, and Gln-92; these read LLV and GFPR. The segment at 126–163 is LID; it reads GRRVCSKCGMSYHIVYNQPKVENICDSCNGELIQRDDD. Arg-127 lines the ATP pocket. Residues Cys-130 and Cys-133 each contribute to the Zn(2+) site. 136-137 is an ATP binding site; that stretch reads SY. Zn(2+) is bound by residues Cys-150 and Cys-153. Residues Arg-160 and Arg-171 each coordinate AMP. Residue Glu-199 coordinates ATP.

This sequence belongs to the adenylate kinase family. In terms of assembly, monomer.

It is found in the cytoplasm. The enzyme catalyses AMP + ATP = 2 ADP. Its pathway is purine metabolism; AMP biosynthesis via salvage pathway; AMP from ADP: step 1/1. In terms of biological role, catalyzes the reversible transfer of the terminal phosphate group between ATP and AMP. Plays an important role in cellular energy homeostasis and in adenine nucleotide metabolism. This is Adenylate kinase from Acetivibrio thermocellus (strain ATCC 27405 / DSM 1237 / JCM 9322 / NBRC 103400 / NCIMB 10682 / NRRL B-4536 / VPI 7372) (Clostridium thermocellum).